A 517-amino-acid chain; its full sequence is MHQTLGAVRLAYRSRIANLVKSGMIDNAVQVFDEMRHSSYRVFSFDYNRFIGVLVRESRFELAEAIYWDMKPMGFSLIPFTYSRFISGLCKVKKFDLIDALLSDMETLGFIPDIWAFNVYLDLLCRENKVGFAVQTFFCMVQRGREPDVVSYTILINGLFRAGKVTDAVEIWNAMIRSGVSPDNKACAALVVGLCHARKVDLAYEMVAEEIKSARVKLSTVVYNALISGFCKAGRIEKAEALKSYMSKIGCEPDLVTYNVLLNYYYDNNMLKRAEGVMAEMVRSGIQLDAYSYNQLLKRHCRVSHPDKCYNFMVKEMEPRGFCDVVSYSTLIETFCRASNTRKAYRLFEEMRQKGMVMNVVTYTSLIKAFLREGNSSVAKKLLDQMTELGLSPDRIFYTTILDHLCKSGNVDKAYGVFNDMIEHEITPDAISYNSLISGLCRSGRVTEAIKLFEDMKGKECCPDELTFKFIIGGLIRGKKLSAAYKVWDQMMDKGFTLDRDVSDTLIKASCSMSADA.

Residues 1–57 (MHQTLGAVRLAYRSRIANLVKSGMIDNAVQVFDEMRHSSYRVFSFDYNRFIGVLVRE) constitute a mitochondrion transit peptide. PPR repeat units lie at residues 8–42 (VRLAYRSRIANLVKSGMIDNAVQVFDEMRHSSYRV), 43–77 (FSFDYNRFIGVLVRESRFELAEAIYWDMKPMGFSL), 78–112 (IPFTYSRFISGLCKVKKFDLIDALLSDMETLGFIP), 113–147 (DIWAFNVYLDLLCRENKVGFAVQTFFCMVQRGREP), 148–182 (DVVSYTILINGLFRAGKVTDAVEIWNAMIRSGVSP), 183–218 (DNKACAALVVGLCHARKVDLAYEMVAEEIKSARVKL), 219–253 (STVVYNALISGFCKAGRIEKAEALKSYMSKIGCEP), 254–288 (DLVTYNVLLNYYYDNNMLKRAEGVMAEMVRSGIQL), 289–320 (DAYSYNQLLKRHCRVSHPDKCYNFMVKEMEPR), 324–358 (DVVSYSTLIETFCRASNTRKAYRLFEEMRQKGMVM), 359–393 (NVVTYTSLIKAFLREGNSSVAKKLLDQMTELGLSP), 394–428 (DRIFYTTILDHLCKSGNVDKAYGVFNDMIEHEITP), 429–463 (DAISYNSLISGLCRSGRVTEAIKLFEDMKGKECCP), and 464–498 (DELTFKFIIGGLIRGKKLSAAYKVWDQMMDKGFTL).

It belongs to the PPR family. P subfamily.

Its subcellular location is the mitochondrion. The chain is Pentatricopeptide repeat-containing protein At1g13040, mitochondrial from Arabidopsis thaliana (Mouse-ear cress).